A 145-amino-acid chain; its full sequence is Transmembrane protein 216 (145 aa).

4 helical membrane passes run 22 to 42 (ILFFLNGWYNATYFLLELFIF), 56 to 76 (LVLDVVMLLLYLGIEVIRLFF), 89 to 109 (LSISVALTFPSAMMASYYLLL), and 122 to 142 (GILLFFCGSELLLEVLTLAAF).

Part of the tectonic-like complex (also named B9 complex). Interacts with TMEM107.

It is found in the membrane. Its subcellular location is the cytoplasm. The protein localises to the cytoskeleton. It localises to the cilium basal body. Its function is as follows. Part of the tectonic-like complex which is required for tissue-specific ciliogenesis and may regulate ciliary membrane composition. This is Transmembrane protein 216 (TMEM216) from Homo sapiens (Human).